Reading from the N-terminus, the 374-residue chain is Speckle-type POZ protein (374 aa).

Residues 31-161 enclose the MATH domain; it reads KFSYMWTINN…DDKLTLFCEV (131 aa). The segment at 71 to 191 is required for nuclear localization; sequence VNPKGLDEES…PDCRLADELG (121 aa). The region spanning 173–297 is the BTB domain; the sequence is QNTMNMVKVP…MCEDALCTSL (125 aa). Residues 297-355 are homodimerization; that stretch reads LSVENAAEILILADLHSADQLKTQAVDFINYHASDVMETSGWKSMVASHPHLVAEAYRS.

This sequence belongs to the Tdpoz family. As to quaternary structure, homodimer. Part of cullin-RING-based BCR (BTB-CUL3-RBX1) E3 ubiquitin-protein ligase complexes that contain CUL3 and SPOP, plus a target protein.

The protein resides in the nucleus. It is found in the nucleus speckle. It functions in the pathway protein modification; protein ubiquitination. Component of a cullin-RING-based BCR (BTB-CUL3-RBX1) E3 ubiquitin-protein ligase complex that mediates the ubiquitination of target proteins, leading most often to their proteasomal degradation. This chain is Speckle-type POZ protein (spop), found in Danio rerio (Zebrafish).